A 211-amino-acid chain; its full sequence is Thiamine-phosphate synthase (211 aa).

Residues 37-41 and asparagine 69 contribute to the 4-amino-2-methyl-5-(diphosphooxymethyl)pyrimidine site; that span reads QLRIK. Mg(2+)-binding residues include aspartate 70 and aspartate 89. A 4-amino-2-methyl-5-(diphosphooxymethyl)pyrimidine-binding site is contributed by serine 108. Residue 134-136 coordinates 2-[(2R,5Z)-2-carboxy-4-methylthiazol-5(2H)-ylidene]ethyl phosphate; that stretch reads TQT. Position 137 (lysine 137) interacts with 4-amino-2-methyl-5-(diphosphooxymethyl)pyrimidine. 2-[(2R,5Z)-2-carboxy-4-methylthiazol-5(2H)-ylidene]ethyl phosphate-binding positions include glycine 166 and 186 to 187; that span reads VS.

The protein belongs to the thiamine-phosphate synthase family. Mg(2+) serves as cofactor.

It carries out the reaction 2-[(2R,5Z)-2-carboxy-4-methylthiazol-5(2H)-ylidene]ethyl phosphate + 4-amino-2-methyl-5-(diphosphooxymethyl)pyrimidine + 2 H(+) = thiamine phosphate + CO2 + diphosphate. The enzyme catalyses 2-(2-carboxy-4-methylthiazol-5-yl)ethyl phosphate + 4-amino-2-methyl-5-(diphosphooxymethyl)pyrimidine + 2 H(+) = thiamine phosphate + CO2 + diphosphate. The catalysed reaction is 4-methyl-5-(2-phosphooxyethyl)-thiazole + 4-amino-2-methyl-5-(diphosphooxymethyl)pyrimidine + H(+) = thiamine phosphate + diphosphate. It participates in cofactor biosynthesis; thiamine diphosphate biosynthesis; thiamine phosphate from 4-amino-2-methyl-5-diphosphomethylpyrimidine and 4-methyl-5-(2-phosphoethyl)-thiazole: step 1/1. Condenses 4-methyl-5-(beta-hydroxyethyl)thiazole monophosphate (THZ-P) and 2-methyl-4-amino-5-hydroxymethyl pyrimidine pyrophosphate (HMP-PP) to form thiamine monophosphate (TMP). The chain is Thiamine-phosphate synthase from Escherichia coli O1:K1 / APEC.